The following is a 306-amino-acid chain: Protein-methionine-sulfoxide reductase catalytic subunit MsrP (306 aa).

The segment at residues 1-45 (MLIRHAPDLTDNDVTDHSLYLKRRTLMAGVAGLGVAGASASHAQA) is a signal peptide (tat-type signal). Mo-molybdopterin is bound by residues asparagine 69, 72–73 (YE), cysteine 127, threonine 162, asparagine 210, arginine 215, and 226–228 (GIK).

This sequence belongs to the MsrP family. In terms of assembly, heterodimer of a catalytic subunit (MsrP) and a heme-binding subunit (MsrQ). It depends on Mo-molybdopterin as a cofactor. Post-translationally, predicted to be exported by the Tat system. The position of the signal peptide cleavage has not been experimentally proven.

The protein resides in the periplasm. It catalyses the reaction L-methionyl-[protein] + a quinone + H2O = L-methionyl-(S)-S-oxide-[protein] + a quinol. The catalysed reaction is L-methionyl-[protein] + a quinone + H2O = L-methionyl-(R)-S-oxide-[protein] + a quinol. Functionally, part of the MsrPQ system that repairs oxidized periplasmic proteins containing methionine sulfoxide residues (Met-O), using respiratory chain electrons. Thus protects these proteins from oxidative-stress damage caused by reactive species of oxygen and chlorine generated by the host defense mechanisms. MsrPQ is essential for the maintenance of envelope integrity under bleach stress, rescuing a wide series of structurally unrelated periplasmic proteins from methionine oxidation. The catalytic subunit MsrP is non-stereospecific, being able to reduce both (R-) and (S-) diastereoisomers of methionine sulfoxide. This is Protein-methionine-sulfoxide reductase catalytic subunit MsrP from Caulobacter vibrioides (strain ATCC 19089 / CIP 103742 / CB 15) (Caulobacter crescentus).